Here is a 241-residue protein sequence, read N- to C-terminus: Uridylate kinase (241 aa).

15–18 provides a ligand contact to ATP; it reads KLSG. The segment at 23–28 is involved in allosteric activation by GTP; the sequence is GSEGFG. Gly-57 contacts UMP. 2 residues coordinate ATP: Gly-58 and Arg-62. UMP-binding positions include Asp-77 and 138–145; that span reads TGNPFFTT. Residues Thr-165, Phe-171, and Asp-174 each coordinate ATP.

It belongs to the UMP kinase family. In terms of assembly, homohexamer.

Its subcellular location is the cytoplasm. It catalyses the reaction UMP + ATP = UDP + ADP. Its pathway is pyrimidine metabolism; CTP biosynthesis via de novo pathway; UDP from UMP (UMPK route): step 1/1. Allosterically activated by GTP. Inhibited by UTP. Functionally, catalyzes the reversible phosphorylation of UMP to UDP. The chain is Uridylate kinase from Klebsiella pneumoniae subsp. pneumoniae (strain ATCC 700721 / MGH 78578).